A 177-amino-acid chain; its full sequence is MSRVAKNPVQIPAGVEVKFDGRLVNIKGGKGALSLSVHPSVEVKQEDGALTFGPKEGSNQARALAGTTRALINNMVLGVTQGFERKLELIGVGYRAQAQGKAINLTLGFSHPVVFEIPEGITAETPTQTEIVIRGIDKQKVGQVAAEIRSIRPPEPYKGKGVRYSGEQVRVKEAKKK.

Belongs to the universal ribosomal protein uL6 family. As to quaternary structure, part of the 50S ribosomal subunit.

In terms of biological role, this protein binds to the 23S rRNA, and is important in its secondary structure. It is located near the subunit interface in the base of the L7/L12 stalk, and near the tRNA binding site of the peptidyltransferase center. The sequence is that of Large ribosomal subunit protein uL6 from Hahella chejuensis (strain KCTC 2396).